Consider the following 337-residue polypeptide: Phosphatidate cytidylyltransferase, mitochondrial (337 aa).

Belongs to the TAM41 family. Mg(2+) is required as a cofactor. Brain and liver.

The protein resides in the mitochondrion inner membrane. It carries out the reaction a 1,2-diacyl-sn-glycero-3-phosphate + CTP + H(+) = a CDP-1,2-diacyl-sn-glycerol + diphosphate. The protein operates within phospholipid metabolism; CDP-diacylglycerol biosynthesis; CDP-diacylglycerol from sn-glycerol 3-phosphate: step 3/3. Catalyzes the conversion of phosphatidic acid (PA) to CDP-diacylglycerol (CDP-DAG), an essential intermediate in the synthesis of phosphatidylglycerol, cardiolipin and phosphatidylinositol. The polypeptide is Phosphatidate cytidylyltransferase, mitochondrial (Tamm41) (Rattus norvegicus (Rat)).